Consider the following 333-residue polypeptide: S-adenosylmethionine decarboxylase proenzyme (333 aa).

A substrate-binding site is contributed by F7. Catalysis depends on residues E8 and E11. E67 provides a ligand contact to substrate. S68 functions as the Schiff-base intermediate with substrate; via pyruvic acid in the catalytic mechanism. Pyruvic acid (Ser); by autocatalysis is present on S68. C82 acts as the Proton donor; for catalytic activity in catalysis. Position 223 (F223) interacts with substrate. Catalysis depends on proton acceptor; for processing activity residues S229 and H243. Position 247 (E247) interacts with substrate. A Phosphoserine modification is found at S298.

The protein belongs to the eukaryotic AdoMetDC family. In terms of assembly, heterotetramer of two alpha and two beta chains. Pyruvate is required as a cofactor. Is synthesized initially as an inactive proenzyme. Formation of the active enzyme involves a self-maturation process in which the active site pyruvoyl group is generated from an internal serine residue via an autocatalytic post-translational modification. Two non-identical subunits are generated from the proenzyme in this reaction, and the pyruvate is formed at the N-terminus of the alpha chain, which is derived from the carboxyl end of the proenzyme. The post-translation cleavage follows an unusual pathway, termed non-hydrolytic serinolysis, in which the side chain hydroxyl group of the serine supplies its oxygen atom to form the C-terminus of the beta chain, while the remainder of the serine residue undergoes an oxidative deamination to produce ammonia and the pyruvoyl group blocking the N-terminus of the alpha chain.

The catalysed reaction is S-adenosyl-L-methionine + H(+) = S-adenosyl 3-(methylsulfanyl)propylamine + CO2. It functions in the pathway amine and polyamine biosynthesis; S-adenosylmethioninamine biosynthesis; S-adenosylmethioninamine from S-adenosyl-L-methionine: step 1/1. Essential for biosynthesis of the polyamines spermidine and spermine. Promotes maintenance and self-renewal of embryonic stem cells, by maintaining spermine levels. In Rattus norvegicus (Rat), this protein is S-adenosylmethionine decarboxylase proenzyme (Amd1).